An 833-amino-acid polypeptide reads, in one-letter code: Lon protease (833 aa).

Residues 3–198 form the Lon N-terminal domain; it reads YPFMATRGVI…LIFSFLVELK (196 aa). Residue 390–397 coordinates ATP; that stretch reads GPPGTGKT. Residues 627–808 form the Lon proteolytic domain; the sequence is YERIGAVNGL…DEIFENLFGK (182 aa). Catalysis depends on residues serine 714 and lysine 757.

The protein belongs to the peptidase S16 family. In terms of assembly, homohexamer. Organized in a ring with a central cavity.

It localises to the cytoplasm. It carries out the reaction Hydrolysis of proteins in presence of ATP.. Functionally, ATP-dependent serine protease that mediates the selective degradation of mutant and abnormal proteins as well as certain short-lived regulatory proteins. Required for cellular homeostasis and for survival from DNA damage and developmental changes induced by stress. Degrades polypeptides processively to yield small peptide fragments that are 5 to 10 amino acids long. Binds to DNA in a double-stranded, site-specific manner. The sequence is that of Lon protease from Mycoplasma mobile (strain ATCC 43663 / 163K / NCTC 11711) (Mesomycoplasma mobile).